We begin with the raw amino-acid sequence, 143 residues long: 3-dehydroquinate dehydratase (143 aa).

Y22 functions as the Proton acceptor in the catalytic mechanism. Substrate-binding residues include N73, H79, and D86. The Proton donor role is filled by H99. Residues 100–101 (IS) and R110 each bind substrate.

This sequence belongs to the type-II 3-dehydroquinase family. In terms of assembly, homododecamer.

The catalysed reaction is 3-dehydroquinate = 3-dehydroshikimate + H2O. It participates in metabolic intermediate biosynthesis; chorismate biosynthesis; chorismate from D-erythrose 4-phosphate and phosphoenolpyruvate: step 3/7. In terms of biological role, catalyzes a trans-dehydration via an enolate intermediate. This is 3-dehydroquinate dehydratase from Mycolicibacterium paratuberculosis (strain ATCC BAA-968 / K-10) (Mycobacterium paratuberculosis).